We begin with the raw amino-acid sequence, 249 residues long: DNA repair protein RecO (249 aa).

The protein belongs to the RecO family.

In terms of biological role, involved in DNA repair and RecF pathway recombination. This Sinorhizobium medicae (strain WSM419) (Ensifer medicae) protein is DNA repair protein RecO.